Reading from the N-terminus, the 678-residue chain is Vacuolar protein sorting-associated protein 1 (678 aa).

Positions 24–311 constitute a Dynamin-type G domain; it reads LIDLPQITVV…LMHHIRNTLP (288 aa). The tract at residues 34–41 is G1 motif; that stretch reads RSQSSGKS. 34-41 is a GTP binding site; it reads RSQSSGKS. The interval 60 to 62 is G2 motif; it reads VTR. Residues 71–96 are disordered; sequence NRPSASGKNEETTTDSDGKDQNNSSE. The span at 78–90 shows a compositional bias: basic and acidic residues; sequence KNEETTTDSDGKD. The tract at residues 153–156 is G3 motif; it reads DLPG. GTP contacts are provided by residues 153–157 and 222–225; these read DLPGL and TKVD. Positions 222-225 are G4 motif; that stretch reads TKVD. The interval 252–255 is G5 motif; sequence INRG. The GED domain occupies 592–678; sequence TEVIKLLIMS…LQASEIVSNV (87 aa).

It belongs to the TRAFAC class dynamin-like GTPase superfamily. Dynamin/Fzo/YdjA family.

The chain is Vacuolar protein sorting-associated protein 1 (vps1) from Schizosaccharomyces pombe (strain 972 / ATCC 24843) (Fission yeast).